The chain runs to 286 residues: Aquaporin PIP2-4 (286 aa).

2 helical membrane passes run 40 to 60 (ALIAEFVATLLFLYVTVATVI) and 77 to 97 (CGGVGVLGIAWAFGGMIFILV). The NPA 1 motif lies at 109-111 (NPA). 3 helical membrane passes run 128–148 (LLYMAAQCLGAICGVALVKGF), 170–190 (GTGLAAEIIGTFVLVYTVFSA), and 204–224 (VLAPLPIGFAVFMVHLATIPI). An NPA 2 motif is present at residues 230–232 (NPA). Residues 252-272 (IFWVGPFIGAAIAALYHQVIL) form a helical membrane-spanning segment.

This sequence belongs to the MIP/aquaporin (TC 1.A.8) family. PIP (TC 1.A.8.11) subfamily. Expressed in roots.

The protein resides in the cell membrane. Water channel required to facilitate the transport of water across cell membrane. May play a role in root water uptake. The protein is Aquaporin PIP2-4 (PIP2-4) of Oryza sativa subsp. japonica (Rice).